Consider the following 261-residue polypeptide: Short chain dehydrogenase/reductase astE (261 aa).

NADP(+)-binding residues include Ile24, Asp70, Asn97, and Lys131. Active-site proton donor residues include Ser150 and Tyr164. NADP(+)-binding residues include Tyr164, Lys168, Val197, and Thr199. Lys168 serves as the catalytic Lowers pKa of active site Tyr.

Belongs to the short-chain dehydrogenases/reductases (SDR) family.

Its pathway is secondary metabolite biosynthesis; terpenoid biosynthesis. In terms of biological role, short chain dehydrogenase/reductase; part of the gene cluster that mediates the biosynthesis of astellolides, drimane-type sesquiterpene esters that show antimicrobial, anti-inflammatory, and anti-tumor activities. The first step in astellolide biosynthesis is performed by the sesquiterpene cyclase astC that catalyzes the formation of drimanyl pyrophosphate from farnesyl pyrophosphate. Drimanyl pyrophosphate is then dephosphorylated by the sesquiterpene phosphatase astI to produce drimanyl monophosphate which is further dephosphorylated to drim-8-ene-11-ol by atsK. Drim-8-ene-11-ol is converted to confertifolin, probably by the cytochrome P450 monooxygenase astD and/or the dehydrogenase astE. The cytochrome P450 monooxygenases astB, astF and astJ then hydroxylate confertifolin at C6, C14, or C15 to form trihydroxy confertifolin. The nonribosomal peptide synthetase astA catalyzes ester bond formation between trihydroxy contifolin and benzoic acid (BA) or 4-hydroxy benzoic acid (4HBA), leading to the formation of dideacetyl astellolides A and B, respectively. Finally, the O-acetyltransferase astG converts dideacetyl astellolides A and B into deacetyl astellolides A and B. In Aspergillus oryzae (strain ATCC 42149 / RIB 40) (Yellow koji mold), this protein is Short chain dehydrogenase/reductase astE.